Reading from the N-terminus, the 141-residue chain is Large ribosomal subunit protein uL14m (141 aa).

The N-terminal 19 residues, 1-19, are a transit peptide targeting the mitochondrion; sequence MALSLSGLILPKLMQQRAF.

Belongs to the universal ribosomal protein uL14 family. As to quaternary structure, component of the mitochondrial ribosome large subunit (39S) which comprises a 16S rRNA and about 50 distinct proteins. Interacts with MALSU1.

The protein resides in the mitochondrion. Functionally, may form part of 2 intersubunit bridges in the assembled ribosome. Upon binding to MALSU1, intersubunit bridge formation is blocked, preventing ribosome formation and repressing translation. In Danio rerio (Zebrafish), this protein is Large ribosomal subunit protein uL14m (mrpl14).